Consider the following 1034-residue polypeptide: Glycine dehydrogenase (decarboxylating), mitochondrial (1034 aa).

A mitochondrion-targeting transit peptide spans 1-63 (MERARRLAML…LNGFGSQVRT (63 aa)). Lys770 carries the N6-(pyridoxal phosphate)lysine modification.

This sequence belongs to the GcvP family. Homodimer. The glycine cleavage system is composed of four proteins: P, T, L and H. The cofactor is pyridoxal 5'-phosphate.

It localises to the mitochondrion. The catalysed reaction is N(6)-[(R)-lipoyl]-L-lysyl-[glycine-cleavage complex H protein] + glycine + H(+) = N(6)-[(R)-S(8)-aminomethyldihydrolipoyl]-L-lysyl-[glycine-cleavage complex H protein] + CO2. Functionally, the glycine cleavage system catalyzes the degradation of glycine. The P protein binds the alpha-amino group of glycine through its pyridoxal phosphate cofactor; CO(2) is released and the remaining methylamine moiety is then transferred to the lipoamide cofactor of the H protein. This chain is Glycine dehydrogenase (decarboxylating), mitochondrial (GDCSPA), found in Flaveria trinervia (Clustered yellowtops).